Here is a 347-residue protein sequence, read N- to C-terminus: GMP reductase (347 aa).

108–131 contributes to the NADP(+) binding site; sequence ADFQKTKDIMALTDDLIFICIDIA. The K(+) site is built by Gly181 and Gly183. Cys186 acts as the Thioimidate intermediate in catalysis. Position 216 to 239 (216 to 239) interacts with NADP(+); sequence IIGDGGCSCAGDVSKAFGGGADFV.

This sequence belongs to the IMPDH/GMPR family. GuaC type 1 subfamily. As to quaternary structure, homotetramer.

The enzyme catalyses IMP + NH4(+) + NADP(+) = GMP + NADPH + 2 H(+). Functionally, catalyzes the irreversible NADPH-dependent deamination of GMP to IMP. It functions in the conversion of nucleobase, nucleoside and nucleotide derivatives of G to A nucleotides, and in maintaining the intracellular balance of A and G nucleotides. This is GMP reductase from Aliivibrio fischeri (strain MJ11) (Vibrio fischeri).